The chain runs to 216 residues: Large ribosomal subunit protein uL1 (216 aa).

Belongs to the universal ribosomal protein uL1 family. As to quaternary structure, component of the large ribosomal subunit.

It is found in the cytoplasm. Functionally, component of the large ribosomal subunit. The ribosome is a large ribonucleoprotein complex responsible for the synthesis of proteins in the cell. This Danio rerio (Zebrafish) protein is Large ribosomal subunit protein uL1 (rpl10a).